The primary structure comprises 388 residues: Lipoyl synthase, mitochondrial (388 aa).

The N-terminal 18 residues, 1 to 18, are a transit peptide targeting the mitochondrion; sequence MRLTTVQRRFLVSTKAKV. The segment covering 22–39 has biased composition (low complexity); sequence SISSTANTGSASAGAPNG. A disordered region spans residues 22–43; sequence SISSTANTGSASAGAPNGQTRR. [4Fe-4S] cluster contacts are provided by C120, C125, C131, C151, C155, C158, and S366. The region spanning 134–355 is the Radical SAM core domain; the sequence is GKDKSKATAT…KDKAKEMGFL (222 aa).

Belongs to the radical SAM superfamily. Lipoyl synthase family. [4Fe-4S] cluster is required as a cofactor.

It localises to the mitochondrion. It carries out the reaction [[Fe-S] cluster scaffold protein carrying a second [4Fe-4S](2+) cluster] + N(6)-octanoyl-L-lysyl-[protein] + 2 oxidized [2Fe-2S]-[ferredoxin] + 2 S-adenosyl-L-methionine + 4 H(+) = [[Fe-S] cluster scaffold protein] + N(6)-[(R)-dihydrolipoyl]-L-lysyl-[protein] + 4 Fe(3+) + 2 hydrogen sulfide + 2 5'-deoxyadenosine + 2 L-methionine + 2 reduced [2Fe-2S]-[ferredoxin]. It participates in protein modification; protein lipoylation via endogenous pathway; protein N(6)-(lipoyl)lysine from octanoyl-[acyl-carrier-protein]: step 2/2. Functionally, catalyzes the radical-mediated insertion of two sulfur atoms into the C-6 and C-8 positions of the octanoyl moiety bound to the lipoyl domains of lipoate-dependent enzymes, thereby converting the octanoylated domains into lipoylated derivatives. The chain is Lipoyl synthase, mitochondrial from Candida glabrata (strain ATCC 2001 / BCRC 20586 / JCM 3761 / NBRC 0622 / NRRL Y-65 / CBS 138) (Yeast).